We begin with the raw amino-acid sequence, 184 residues long: Large ribosomal subunit protein uL6 (184 aa).

It belongs to the universal ribosomal protein uL6 family. As to quaternary structure, part of the 50S ribosomal subunit.

Its function is as follows. This protein binds to the 23S rRNA, and is important in its secondary structure. It is located near the subunit interface in the base of the L7/L12 stalk, and near the tRNA binding site of the peptidyltransferase center. This Desulfitobacterium hafniense (strain Y51) protein is Large ribosomal subunit protein uL6.